Here is a 518-residue protein sequence, read N- to C-terminus: Anthranilate synthase component 1 (518 aa).

Residues Ser41 and 291–293 (PYM) each bind L-tryptophan. Residue 328-329 (GS) coordinates chorismate. Position 361 (Glu361) interacts with Mg(2+). Chorismate contacts are provided by residues Tyr449, Arg469, 483–485 (GCG), and Gly485. Glu498 contributes to the Mg(2+) binding site.

The protein belongs to the anthranilate synthase component I family. As to quaternary structure, heterotetramer consisting of two non-identical subunits: a beta subunit (TrpG) and a large alpha subunit (TrpE). It depends on Mg(2+) as a cofactor.

The enzyme catalyses chorismate + L-glutamine = anthranilate + pyruvate + L-glutamate + H(+). The protein operates within amino-acid biosynthesis; L-tryptophan biosynthesis; L-tryptophan from chorismate: step 1/5. With respect to regulation, feedback inhibited by tryptophan. Functionally, part of a heterotetrameric complex that catalyzes the two-step biosynthesis of anthranilate, an intermediate in the biosynthesis of L-tryptophan. In the first step, the glutamine-binding beta subunit (TrpG) of anthranilate synthase (AS) provides the glutamine amidotransferase activity which generates ammonia as a substrate that, along with chorismate, is used in the second step, catalyzed by the large alpha subunit of AS (TrpE) to produce anthranilate. In the absence of TrpG, TrpE can synthesize anthranilate directly from chorismate and high concentrations of ammonia. In Haemophilus influenzae (strain ATCC 51907 / DSM 11121 / KW20 / Rd), this protein is Anthranilate synthase component 1 (trpE).